The sequence spans 56 residues: Small ribosomal subunit protein uS14 (56 aa).

Residues Cys-21, Cys-24, Cys-39, and Cys-42 each coordinate Zn(2+).

This sequence belongs to the universal ribosomal protein uS14 family. Zn(2+) is required as a cofactor.

This chain is Small ribosomal subunit protein uS14 (RPS29), found in Candida glabrata (strain ATCC 2001 / BCRC 20586 / JCM 3761 / NBRC 0622 / NRRL Y-65 / CBS 138) (Yeast).